A 64-amino-acid chain; its full sequence is MATVKFKYKGEEKEVDISKIKKVWRVGKMISFTYDEGGGKTGRGAVSEKDAPKELLQMLEKQKK.

Lys5, Lys7, Lys61, Lys63, and Lys64 each carry N6-methyllysine.

The protein belongs to the 7 kDa DNA-binding/endoribonuclease P2 family. Monomer.

The protein resides in the cytoplasm. Can constrain negative DNA supercoils. May be involved in maintaining the integrity of the genome at high temperature. Stimulates the Holliday junction cleavage activity of Hjc. The polypeptide is DNA-binding protein 7d (sso7d) (Saccharolobus solfataricus (strain ATCC 35092 / DSM 1617 / JCM 11322 / P2) (Sulfolobus solfataricus)).